Here is a 432-residue protein sequence, read N- to C-terminus: D-amino acid dehydrogenase (432 aa).

Position 3–17 (3–17) interacts with FAD; it reads VVILGSGVVGVTSAW.

Belongs to the DadA oxidoreductase family. Requires FAD as cofactor.

It catalyses the reaction a D-alpha-amino acid + A + H2O = a 2-oxocarboxylate + AH2 + NH4(+). Its pathway is amino-acid degradation; D-alanine degradation; NH(3) and pyruvate from D-alanine: step 1/1. Its function is as follows. Oxidative deamination of D-amino acids. The chain is D-amino acid dehydrogenase from Salmonella choleraesuis (strain SC-B67).